A 484-amino-acid polypeptide reads, in one-letter code: Nuclear rim protein 1 (484 aa).

S3 is modified (phosphoserine). 2 helical membrane passes run 145 to 165 (FTIFILLSLNLYVSCKFMFGY) and 237 to 257 (IPTNFIINLFVSFSPTAIVFL). The tract at residues 416–457 (SSNENLEKGGAFLPNQDQNRPSKSLSPLRKTPLSARQKRFEG) is disordered. Phosphoserine is present on S417. Polar residues predominate over residues 430 to 440 (NQDQNRPSKSL). Phosphoserine is present on S474.

It belongs to the NUR1 family. In terms of assembly, interacts with CSM1.

It is found in the nucleus membrane. Its function is as follows. Member of a perinuclear network that controls recombination at multiple loci to maintain genome stability. Required for rDNA repeat stability. The polypeptide is Nuclear rim protein 1 (NUR1) (Saccharomyces cerevisiae (strain JAY291) (Baker's yeast)).